The primary structure comprises 286 residues: ATP synthase gamma chain (286 aa).

It belongs to the ATPase gamma chain family. As to quaternary structure, F-type ATPases have 2 components, CF(1) - the catalytic core - and CF(0) - the membrane proton channel. CF(1) has five subunits: alpha(3), beta(3), gamma(1), delta(1), epsilon(1). CF(0) has three main subunits: a, b and c.

It is found in the cell membrane. Produces ATP from ADP in the presence of a proton gradient across the membrane. The gamma chain is believed to be important in regulating ATPase activity and the flow of protons through the CF(0) complex. This Malacoplasma penetrans (strain HF-2) (Mycoplasma penetrans) protein is ATP synthase gamma chain.